Here is a 652-residue protein sequence, read N- to C-terminus: Putative enzymatic polyprotein (652 aa).

The 79-residue stretch at 21–99 folds into the Peptidase A2 domain; that stretch reads YHGLFDTGAN…SPDIIIGATF (79 aa). The active site involves Asp-26. Positions 231 to 413 constitute a Reverse transcriptase domain; that stretch reads FIEEKTNFED…EKIDFLGVQI (183 aa). Mg(2+)-binding residues include Asp-301, Asp-364, and Asp-365.

The enzyme catalyses DNA(n) + a 2'-deoxyribonucleoside 5'-triphosphate = DNA(n+1) + diphosphate. It carries out the reaction Endonucleolytic cleavage to 5'-phosphomonoester.. Its function is as follows. Encodes for at least two polypeptides: protease (PR) and reverse transcriptase (RT). The protease processes the polyprotein in cis. Reverse transcriptase is multifunctional enzyme that converts the viral RNA genome into dsDNA in viral cytoplasmic capsids. This enzyme displays a DNA polymerase activity that can copy either DNA or RNA templates, and a ribonuclease H (RNase H) activity that cleaves the RNA strand of RNA-DNA heteroduplexes in a partially processive 3'- to 5'-endonucleasic mode. Neo-synthesized pregenomic RNA (pgRNA) are encapsidated, and reverse-transcribed inside the nucleocapsid. Partial (+)DNA is synthesized from the (-)DNA template and generates the relaxed circular DNA (RC-DNA) genome. After budding and infection, the RC-DNA migrates in the nucleus, and is converted into a plasmid-like covalently closed circular DNA (cccDNA). In Cassava vein mosaic virus (CsVMV), this protein is Putative enzymatic polyprotein.